The chain runs to 154 residues: Plastocyanin, chloroplastic (154 aa).

Residues 1–57 constitute a chloroplast transit peptide; the sequence is MAALSSAAVTIPSMAPSAPGRRRMRSSLVVRASLGKAAGAAAVAVAASAMLAGGAMA. A Plastocyanin-like domain is found at 58 to 154; the sequence is QEVLLGANGG…AGMVGKVTVN (97 aa). Residues H94, C139, H142, and M147 each coordinate Cu cation.

This sequence belongs to the plastocyanin family. The cofactor is Cu(2+).

It is found in the plastid. Its subcellular location is the chloroplast thylakoid membrane. Participates in electron transfer between P700 and the cytochrome b6-f complex in photosystem I. The protein is Plastocyanin, chloroplastic (PETE) of Oryza sativa subsp. indica (Rice).